A 251-amino-acid chain; its full sequence is Maleate isomerase (251 aa).

Substrate is bound by residues Asn15, 81-83, Tyr138, and Asn168; that span reads CLV. The Nucleophile role is filled by Cys81. S-(2-succinyl)cysteine is present on Cys81. The Proton donor role is filled by Cys199. 200–201 serves as a coordination point for substrate; it reads VQ.

The protein belongs to the maleate isomerase family. As to quaternary structure, homodimer.

The enzyme catalyses maleate = fumarate. Its function is as follows. Catalyzes cis-trans isomerization of the C2-C3 double bond in maleate to yield fumarate. The sequence is that of Maleate isomerase from Geobacillus stearothermophilus (Bacillus stearothermophilus).